Here is a 392-residue protein sequence, read N- to C-terminus: Cyclic di-GMP phosphodiesterase RocR (392 aa).

In terms of domain architecture, Response regulatory spans 5–126; the sequence is NVLVLEDEPF…RITALLTRYN (122 aa). Residue Asp56 is modified to 4-aspartylphosphate. The region spanning 140–392 is the EAL domain; it reads ELPSVADVVR…QHFLDYCSGS (253 aa). 4 residues coordinate Mg(2+): Glu175, Asn233, Glu265, and Asp295. Catalysis depends on Glu352, which acts as the Proton acceptor.

Homotetramer. Exhibits a highly unusual tetrameric structure arranged around a single dyad, with the four subunits adopting two distinctly different conformations, with only two active sites accessible for substrate binding. Interacts with RocS1. Mg(2+) serves as cofactor.

It carries out the reaction 3',3'-c-di-GMP + H2O = 5'-phosphoguanylyl(3'-&gt;5')guanosine + H(+). Phosphorylation of Asp-56 probably induces local conformational changes in the response regulatory domain. These structural changes are transmitted to the adjacent EAL domain, then the signal is further transmitted down to the active site. The phosphodiesterase activity is inhibited by Ca(2+) and Zn(2+). Phosphodiesterase activity is inhibited by a benzoisothiazolinone derivative that specifically inhibited RocR, but not some other phosphodiesterases. Phosphodiesterase (PDE) that catalyzes the hydrolysis of cyclic diguanylate (c-di-GMP) to 5'-pGpG. Cannot use cyclic AMP or cyclic GMP. Part of the RocSAR two-component regulatory signaling system (also known as the SadARS system), which regulates biofilm maturation, type III secretion and expression of the cup fimbrial-gene cluster. Negatively regulates the expression of cup genes by antagonizing the activity of RocA1. This is Cyclic di-GMP phosphodiesterase RocR from Pseudomonas aeruginosa (strain ATCC 15692 / DSM 22644 / CIP 104116 / JCM 14847 / LMG 12228 / 1C / PRS 101 / PAO1).